The primary structure comprises 216 residues: Adenylate kinase (216 aa).

10–15 (GAGKGT) lines the ATP pocket. Residues 30–59 (STGDMFRAAMKAETEMGLQAKSFIDKGALV) form an NMP region. AMP-binding positions include threonine 31, arginine 36, 57-59 (ALV), 85-88 (GFPR), and glutamine 92. Residues 126–163 (GRRICKECGATYHLEFNPPAKADVCDKCGGELYQRSDD) are LID. Arginine 127 contributes to the ATP binding site. Cysteine 130 and cysteine 133 together coordinate Zn(2+). Residue 136-137 (TY) participates in ATP binding. Zn(2+)-binding residues include cysteine 150 and cysteine 153. AMP is bound by residues arginine 160 and arginine 171. Glutamine 199 lines the ATP pocket.

It belongs to the adenylate kinase family. In terms of assembly, monomer.

It localises to the cytoplasm. It catalyses the reaction AMP + ATP = 2 ADP. It functions in the pathway purine metabolism; AMP biosynthesis via salvage pathway; AMP from ADP: step 1/1. Its function is as follows. Catalyzes the reversible transfer of the terminal phosphate group between ATP and AMP. Plays an important role in cellular energy homeostasis and in adenine nucleotide metabolism. In Bacillus cereus (strain G9842), this protein is Adenylate kinase.